The sequence spans 162 residues: Protein-export protein SecB (162 aa).

The protein belongs to the SecB family. In terms of assembly, homotetramer, a dimer of dimers. One homotetramer interacts with 1 SecA dimer.

Its subcellular location is the cytoplasm. Functionally, one of the proteins required for the normal export of preproteins out of the cell cytoplasm. It is a molecular chaperone that binds to a subset of precursor proteins, maintaining them in a translocation-competent state. It also specifically binds to its receptor SecA. This Pseudomonas savastanoi pv. phaseolicola (strain 1448A / Race 6) (Pseudomonas syringae pv. phaseolicola (strain 1448A / Race 6)) protein is Protein-export protein SecB.